We begin with the raw amino-acid sequence, 82 residues long: Protein CYSTEINE-RICH TRANSMEMBRANE MODULE 13 (82 aa).

Residues Met-1–Gln-58 are disordered. The span at Ala-26–Gly-37 shows a compositional bias: pro residues. The chain crosses the membrane as a helical span at residues Lys-59–Cys-76.

Belongs to the CYSTM1 family. Homodimer and heterodimers. Interacts with CYSTM7, CYTSM3, CYTSM4, CYTSM5, CYTSM6, CYTSM9, CYTSM10 and CYTSM11. Binds weakly to CYSTM1 and CYSTM2. Expressed in root meristem, root vasculature, leaf vasculature and floral organ primordia. Mostly expressed in roots and flowers and, to a lower extent, in stems, siliques and leaves.

The protein resides in the cell membrane. Functionally, required for the promotion of megasporogenesis, or promotion of germ cell formation from somatic precursor cells. Acts redundantly with WIH2. Functions in a genetic pathway downstream of SPL/NZZ and WUS and together with TRN2 in promoting megasporogenesis. Involved in resistance to abiotic stress. This is Protein CYSTEINE-RICH TRANSMEMBRANE MODULE 13 from Arabidopsis thaliana (Mouse-ear cress).